The primary structure comprises 639 residues: uncharacterized protein (639 aa).

Residues 1–16 (MLTLYLFTATCCFVCA) form the signal peptide. Disordered stretches follow at residues 80–128 (RRRA…SDKL) and 432–488 (QTAT…TSRT). Composition is skewed to polar residues over residues 108–122 (TYAT…TASP) and 432–446 (QTAT…QQQP). Residues 465–480 (HGDEPHSDGELRRESH) are compositionally biased toward basic and acidic residues.

This is an uncharacterized protein from Human cytomegalovirus (strain Merlin) (HHV-5).